Reading from the N-terminus, the 701-residue chain is Elongation factor G 2 (701 aa).

Residues 8 to 290 (ERYRNIGISA…AVIDYLPSPA (283 aa)) form the tr-type G domain. GTP contacts are provided by residues 17–24 (AHIDAGKT), 88–92 (DTPGH), and 142–145 (NKMD).

This sequence belongs to the TRAFAC class translation factor GTPase superfamily. Classic translation factor GTPase family. EF-G/EF-2 subfamily.

It is found in the cytoplasm. Catalyzes the GTP-dependent ribosomal translocation step during translation elongation. During this step, the ribosome changes from the pre-translocational (PRE) to the post-translocational (POST) state as the newly formed A-site-bound peptidyl-tRNA and P-site-bound deacylated tRNA move to the P and E sites, respectively. Catalyzes the coordinated movement of the two tRNA molecules, the mRNA and conformational changes in the ribosome. The chain is Elongation factor G 2 from Cupriavidus pinatubonensis (strain JMP 134 / LMG 1197) (Cupriavidus necator (strain JMP 134)).